The following is a 140-amino-acid chain: 3-hydroxyacyl-[acyl-carrier-protein] dehydratase FabZ (140 aa).

H48 is an active-site residue.

It belongs to the thioester dehydratase family. FabZ subfamily.

The protein localises to the cytoplasm. It catalyses the reaction a (3R)-hydroxyacyl-[ACP] = a (2E)-enoyl-[ACP] + H2O. In terms of biological role, involved in unsaturated fatty acids biosynthesis. Catalyzes the dehydration of short chain beta-hydroxyacyl-ACPs and long chain saturated and unsaturated beta-hydroxyacyl-ACPs. This chain is 3-hydroxyacyl-[acyl-carrier-protein] dehydratase FabZ, found in Latilactobacillus sakei subsp. sakei (strain 23K) (Lactobacillus sakei subsp. sakei).